Here is a 147-residue protein sequence, read N- to C-terminus: uncharacterized protein (147 aa).

The next 2 membrane-spanning stretches (helical) occupy residues 21-41 and 67-87; these read LMLW…IVFV and ALFG…SIPL.

It is found in the cell membrane. This is an uncharacterized protein from Ureaplasma parvum serovar 3 (strain ATCC 700970).